Here is a 397-residue protein sequence, read N- to C-terminus: F-box protein At3g28330 (397 aa).

The 51-residue stretch at 6 to 56 (KKDMDFLTEDLWEIILARLPLKSIITTPKLVCKVWKSIIESRCFRDLFQSL) folds into the F-box domain.

The sequence is that of F-box protein At3g28330 from Arabidopsis thaliana (Mouse-ear cress).